The chain runs to 432 residues: tRNA(Ile)-lysidine synthase (432 aa).

ATP is bound at residue 19-24 (STGIDS).

The protein belongs to the tRNA(Ile)-lysidine synthase family.

It localises to the cytoplasm. The enzyme catalyses cytidine(34) in tRNA(Ile2) + L-lysine + ATP = lysidine(34) in tRNA(Ile2) + AMP + diphosphate + H(+). In terms of biological role, ligates lysine onto the cytidine present at position 34 of the AUA codon-specific tRNA(Ile) that contains the anticodon CAU, in an ATP-dependent manner. Cytidine is converted to lysidine, thus changing the amino acid specificity of the tRNA from methionine to isoleucine. In Staphylococcus epidermidis (strain ATCC 35984 / DSM 28319 / BCRC 17069 / CCUG 31568 / BM 3577 / RP62A), this protein is tRNA(Ile)-lysidine synthase.